The chain runs to 216 residues: uncharacterized protein (216 aa).

Over residues 182-193 (STSNASVNSDDA) the composition is skewed to polar residues. The segment at 182–204 (STSNASVNSDDASTAELGPTSEE) is disordered.

This is an uncharacterized protein from Caenorhabditis elegans.